A 256-amino-acid chain; its full sequence is Protein FixA (256 aa).

This sequence belongs to the ETF beta-subunit/FixA family. As to quaternary structure, heterodimer of FixA and FixB.

Its pathway is amine and polyamine metabolism; carnitine metabolism. In terms of biological role, required for anaerobic carnitine reduction. May bring reductant to CaiA. This Escherichia fergusonii (strain ATCC 35469 / DSM 13698 / CCUG 18766 / IAM 14443 / JCM 21226 / LMG 7866 / NBRC 102419 / NCTC 12128 / CDC 0568-73) protein is Protein FixA.